The primary structure comprises 446 residues: Glutamine synthetase (446 aa).

The region spanning 18–103 is the GS beta-grasp domain; it reads ENVRYLRLQF…LICDVYKTDG (86 aa). A GS catalytic domain is found at 110 to 446; the sequence is PRANLKRVLK…WERDQYMKQY (337 aa). Residues E134 and E136 each contribute to the Mg(2+) site. E186 serves as a coordination point for ATP. Mg(2+) is bound by residues E191 and E198. L-glutamate is bound by residues 242–243 and G243; that span reads NG. Residue H247 participates in Mg(2+) binding. Residue S251 coordinates ATP. The L-glutamate site is built by R300, E306, and R318. 2 residues coordinate ATP: R318 and R323. A Mg(2+)-binding site is contributed by E335. R337 contacts L-glutamate.

Belongs to the glutamine synthetase family. In terms of assembly, oligomer of 12 subunits arranged in the form of two hexagons. In its feedback-inhibited form, interacts with TnrA in order to block its DNA-binding activity. Mg(2+) serves as cofactor.

The protein localises to the cytoplasm. The catalysed reaction is L-glutamate + NH4(+) + ATP = L-glutamine + ADP + phosphate + H(+). With respect to regulation, inhibited by glutamine. Glutamine synthetase (GS) is an unusual multitasking protein that functions as an enzyme, a transcription coregulator, and a chaperone in ammonium assimilation and in the regulation of genes involved in nitrogen metabolism. It catalyzes the ATP-dependent biosynthesis of glutamine from glutamate and ammonia. Feedback-inhibited GlnA also interacts with and regulates the activity of the transcriptional regulator TnrA. During nitrogen limitation, TnrA is in its DNA-binding active state and turns on the transcription of genes required for nitrogen assimilation. Under conditions of nitrogen excess, feedback-inhibited GlnA forms a stable complex with TnrA, which inhibits its DNA-binding activity. In contrast, feedback-inhibited GlnA acts as a chaperone to stabilize the DNA-binding activity of GlnR, which represses the transcription of nitrogen assimilation genes. This chain is Glutamine synthetase, found in Staphylococcus aureus (strain MSSA476).